The sequence spans 61 residues: Double gene block protein 1 (61 aa).

A disordered region spans residues 1–45; it reads MDIESEVPVVGKQMLAGNRGKQKTRRSVAKDAIRKPASDSTNGGN. The RNA-binding stretch occupies residues 17–35; the sequence is GNRGKQKTRRSVAKDAIRK. Residues 28 to 37 show a composition bias toward basic and acidic residues; it reads VAKDAIRKPA.

This sequence belongs to the carmovirus double gene block protein 1 family. As to quaternary structure, homodimer.

Cell-to-cell movement. Displays RNA-binding activity. In Carnation mottle virus (CarMV), this protein is Double gene block protein 1.